We begin with the raw amino-acid sequence, 218 residues long: Trichothecene biosynthesis transcription regulator TRI6 (218 aa).

The interval 154 to 181 is disordered; sequence SQSTNDPGDAGKKGFATRKDRARHEAKH. Positions 162 to 176 are enriched in basic and acidic residues; sequence DAGKKGFATRKDRAR. Residues 185–215 form a C2H2-type zinc finger; it reads IRCQWRDNNGDQCTRTFSRMDNMRDHFRRIH.

Its subcellular location is the nucleus. In terms of biological role, transcriptional activator of part of the trichothecene biosynthesis cluster that mediates the production of the antimicrobial trichothecene harzianum A (HA) that plays a role in Botrytis cinerea antagonistic activity and plant defense priming. Regulates expression of both trichothecene and mevalonate pathway genes. The polypeptide is Trichothecene biosynthesis transcription regulator TRI6 (Trichoderma arundinaceum).